The following is a 369-amino-acid chain: DNA replication and repair protein RecF (369 aa).

Residue 30–37 (GPNGSGKT) participates in ATP binding.

It belongs to the RecF family.

The protein localises to the cytoplasm. The RecF protein is involved in DNA metabolism; it is required for DNA replication and normal SOS inducibility. RecF binds preferentially to single-stranded, linear DNA. It also seems to bind ATP. In Chlorobium luteolum (strain DSM 273 / BCRC 81028 / 2530) (Pelodictyon luteolum), this protein is DNA replication and repair protein RecF.